The sequence spans 152 residues: MAKGVAVLNSSEGVTGTIFFTQEGDGVTTVSGTVSGLKPGLHGFHVHALGDTTNGCMSTGPHFNPDGKTHGAPEDANRHAGDLGNITVGDDGTATFTITDCQIPLTGPNSIVGRAVVVHADPDDLGKGGHELSLATGNAGGRVACGIIGLQG.

Cu cation is bound by residues His-45, His-47, and His-62. An intrachain disulfide couples Cys-56 to Cys-145. Zn(2+) is bound by residues His-62, His-70, His-79, and Asp-82. Cu cation is bound at residue His-119.

This sequence belongs to the Cu-Zn superoxide dismutase family. In terms of assembly, homodimer. Interacts with DJ1A and CCS. Requires Cu cation as cofactor. Zn(2+) is required as a cofactor. Expressed in leaves (at protein level). The spatial localization is regulated by miR398-mediated silencing. Mostly present in flowers, old rosette leaves and inflorescence, and, to a lower extent, in cauline leaves, stems and roots.

Its subcellular location is the cytoplasm. The protein localises to the cytosol. It localises to the nucleus. The catalysed reaction is 2 superoxide + 2 H(+) = H2O2 + O2. In terms of biological role, destroys radicals which are normally produced within the cells and which are toxic to biological systems. This Arabidopsis thaliana (Mouse-ear cress) protein is Superoxide dismutase [Cu-Zn] 1 (CSD1).